We begin with the raw amino-acid sequence, 428 residues long: Probable protein phosphatase 2C 12 (428 aa).

The PPM-type phosphatase domain maps to 24 to 293 (KIDNPELIHG…DDTTCIVVDI (270 aa)). Residues Asp69, Gly70, Asp245, and Asp284 each contribute to the Mn(2+) site. The interval 301–331 (ASVPPPKKQGKGMLKSMFKRKTSDSSSNIEK) is disordered.

This sequence belongs to the PP2C family. Requires Mg(2+) as cofactor. It depends on Mn(2+) as a cofactor.

The enzyme catalyses O-phospho-L-seryl-[protein] + H2O = L-seryl-[protein] + phosphate. The catalysed reaction is O-phospho-L-threonyl-[protein] + H2O = L-threonyl-[protein] + phosphate. The polypeptide is Probable protein phosphatase 2C 12 (Arabidopsis thaliana (Mouse-ear cress)).